A 128-amino-acid polypeptide reads, in one-letter code: Large ribosomal subunit protein bL12 (128 aa).

The protein belongs to the bacterial ribosomal protein bL12 family. As to quaternary structure, homodimer. Part of the ribosomal stalk of the 50S ribosomal subunit. Forms a multimeric L10(L12)X complex, where L10 forms an elongated spine to which 2 to 4 L12 dimers bind in a sequential fashion. Binds GTP-bound translation factors.

In terms of biological role, forms part of the ribosomal stalk which helps the ribosome interact with GTP-bound translation factors. Is thus essential for accurate translation. The chain is Large ribosomal subunit protein bL12 from Sorangium cellulosum (strain So ce56) (Polyangium cellulosum (strain So ce56)).